A 603-amino-acid chain; its full sequence is MTDVPVSRIRNFSIIAHIDHGKSTLADRLLQTTGTVADREMKEQFLDNMELERERGITIKLQAARMAYQASDKEDYVLNLIDTPGHVDFSYEVSRSLAACEGALLVVDASQGVEAQTLANVYLAIEHDLEIIPVLNKIDLPGAEPDRVKQEIEEIVGLDCSGAILASAKTGIGIAEILESIVHLVPPPEDTTQEPLRALIFDSYYDLYRGVVVYFRVMDGTVKKGDRVRLMASGKEYDVDELGVLSPTQVQVDELHAGEVGYFAAAIKAVEDARVGDTITLAKAQAAEPLPGYVEAKPMVFCGMFPTDADQFPDLRDALERLKLNDAALNYEPETSSAMGFGFRCGFLGLLHMEIVQERLEREYNLDLIITAPSVVYRITTLKGETLLIDNPSSLPDPQHREKIEEPFVQVDMITPEEYVGTLMELGQSRRGTFKDMKYLTPGRTTLVYELPLAEVVTDFFDQMKSRSRGYASMEYHLIGYRENPLVKLDILINADPVDSLAAIVHRDKAYYTGRALVSKLRELIPRHQFKIPIQAAIGAKVIASESIPALRKDVLAKCYGGDVSRKRKLLEKQKAGKKRMKSVGRVDVPQEAFMAVLRITDE.

Positions 7–189 (SRIRNFSIIA…SIVHLVPPPE (183 aa)) constitute a tr-type G domain. GTP contacts are provided by residues 19 to 24 (DHGKST) and 136 to 139 (NKID).

This sequence belongs to the TRAFAC class translation factor GTPase superfamily. Classic translation factor GTPase family. LepA subfamily.

It is found in the cell inner membrane. It catalyses the reaction GTP + H2O = GDP + phosphate + H(+). In terms of biological role, required for accurate and efficient protein synthesis under certain stress conditions. May act as a fidelity factor of the translation reaction, by catalyzing a one-codon backward translocation of tRNAs on improperly translocated ribosomes. Back-translocation proceeds from a post-translocation (POST) complex to a pre-translocation (PRE) complex, thus giving elongation factor G a second chance to translocate the tRNAs correctly. Binds to ribosomes in a GTP-dependent manner. This chain is Elongation factor 4, found in Acaryochloris marina (strain MBIC 11017).